The chain runs to 493 residues: FAD-linked oxidoreductase tazL (493 aa).

The N-terminal stretch at 1–17 (MRSNTVILAALPLVASA) is a signal peptide. N-linked (GlcNAc...) asparagine glycans are attached at residues Asn29, Asn41, Asn53, Asn91, Asn253, Asn318, and Asn387. In terms of domain architecture, FAD-binding PCMH-type spans 63–235 (WAEPTFAVTI…TSATYEIFDA (173 aa)).

This sequence belongs to the oxygen-dependent FAD-linked oxidoreductase family.

The protein operates within secondary metabolite biosynthesis. Its function is as follows. FAD-linked oxidoreductase; part of the gene cluster that mediates the biosynthesis of azaterrilone A and other azaphilones, a class of fungal metabolites characterized by a highly oxygenated pyrano-quinone bicyclic core and exhibiting a broad range of bioactivities. The first step of the pathway begins with the non-reducing polyketide synthase tazA that assembles one acetyl-CoA starter unit, five malonyl-CoA units, and catalyzes a series of Claisen condensations, methylation, PT-mediated cyclization, and finally releases the first hexaketide precursor through the R-domain. The tazA product then undergoes reduction on its terminal ketone and the following pyran-ring formation by yet undetermined enzyme(s). Dehydration and enoyl reduction, possibly involving the trans-enoyl reductase tazE leads to the next intermediate. TazD is predicted as an acetyltransferase and might catalyze the acetylation steps leading to the synthesis of azaterrilone A. Azaterrilone A is not the final product of the taz pathway and both the highly reducing polyketide synthase tazB and the dual enzyme tazHJ catalyze late steps of the pathway, leading to the production of the 2 final stereoisomers that contain additional polyketide modification whose structures have still to be determined. This chain is FAD-linked oxidoreductase tazL, found in Aspergillus terreus (strain NIH 2624 / FGSC A1156).